Reading from the N-terminus, the 383-residue chain is Protein salvador homolog 1 (383 aa).

Residues Ser94 and Ser136 each carry the phosphoserine modification. 2 consecutive WW domains span residues 199-232 (LPLP…HPLE) and 234-267 (EGLP…HPCA). At Thr210 the chain carries Phosphothreonine. The SARAH domain maps to 321 to 368 (ILKWELFQLADLDTYQGMLKLLFMKELEQIVKMYEAYRQALLTELENR). The stretch at 344 to 373 (MKELEQIVKMYEAYRQALLTELENRKQRQQ) forms a coiled coil.

Homodimer. Stabilized through interaction with STK3/MST2 or STK4/MST1. Interacts (via SARAH domain) with isoform 1 of NEK2. Interacts with ESR1 only in the presence of STK3/MST2. Interacts with WTIP and AJUBA. In terms of processing, phosphorylated by STK3/MST2 and STK4/MST1. Phosphorylation is not required for SAV1 stability and may increase the number of protein binding sites on the scaffold molecule. As to expression, ubiquitously expressed in adult tissues with highest expression in the pancreas, aorta and interventricular septum and lowest expression in skeletal muscle. Expression was higher in fetal than in the adult heart. Expressed in various cell lines.

It is found in the nucleus. Its subcellular location is the cytoplasm. In terms of biological role, regulator of STK3/MST2 and STK4/MST1 in the Hippo signaling pathway which plays a pivotal role in organ size control and tumor suppression by restricting proliferation and promoting apoptosis. The core of this pathway is composed of a kinase cascade wherein STK3/MST2 and STK4/MST1, in complex with its regulatory protein SAV1, phosphorylates and activates LATS1/2 in complex with its regulatory protein MOB1, which in turn phosphorylates and inactivates YAP1 oncoprotein and WWTR1/TAZ. Phosphorylation of YAP1 by LATS1/2 inhibits its translocation into the nucleus to regulate cellular genes important for cell proliferation, cell death, and cell migration. SAV1 is required for STK3/MST2 and STK4/MST1 activation and promotes cell-cycle exit and terminal differentiation in developing epithelial tissues. Plays a role in centrosome disjunction by regulating the localization of NEK2 to centrosomes, and its ability to phosphorylate CROCC and CEP250. In conjunction with STK3/MST2, activates the transcriptional activity of ESR1 through the modulation of its phosphorylation. This chain is Protein salvador homolog 1, found in Homo sapiens (Human).